Reading from the N-terminus, the 193-residue chain is Potassium-transporting ATPase KdpC subunit (193 aa).

Residues 7-27 traverse the membrane as a helical segment; sequence PALVLFAALTLLTGVAYPLAV.

It belongs to the KdpC family. The system is composed of three essential subunits: KdpA, KdpB and KdpC.

Its subcellular location is the cell inner membrane. In terms of biological role, part of the high-affinity ATP-driven potassium transport (or Kdp) system, which catalyzes the hydrolysis of ATP coupled with the electrogenic transport of potassium into the cytoplasm. This subunit acts as a catalytic chaperone that increases the ATP-binding affinity of the ATP-hydrolyzing subunit KdpB by the formation of a transient KdpB/KdpC/ATP ternary complex. This is Potassium-transporting ATPase KdpC subunit from Rhodospirillum rubrum (strain ATCC 11170 / ATH 1.1.1 / DSM 467 / LMG 4362 / NCIMB 8255 / S1).